A 129-amino-acid chain; its full sequence is Small ribosomal subunit protein uS11 (129 aa).

Belongs to the universal ribosomal protein uS11 family. As to quaternary structure, part of the 30S ribosomal subunit. Interacts with proteins S7 and S18. Binds to IF-3.

Functionally, located on the platform of the 30S subunit, it bridges several disparate RNA helices of the 16S rRNA. Forms part of the Shine-Dalgarno cleft in the 70S ribosome. The sequence is that of Small ribosomal subunit protein uS11 from Sinorhizobium medicae (strain WSM419) (Ensifer medicae).